Here is a 312-residue protein sequence, read N- to C-terminus: 4-hydroxyphenylacetate decarboxylase activating enzyme (312 aa).

The Radical SAM core domain maps to histidine 16–aspartate 299. 7 residues coordinate [4Fe-4S] cluster: cysteine 30, cysteine 34, cysteine 37, cysteine 56, cysteine 62, cysteine 65, and cysteine 101. Residue tryptophan 36–alanine 38 participates in S-adenosyl-L-methionine binding. 4Fe-4S ferredoxin-type domains follow at residues lysine 47 to aspartate 79 and glycine 80 to glutamate 112. S-adenosyl-L-methionine contacts are provided by residues glycine 140, aspartate 189–lysine 191, and histidine 263.

This sequence belongs to the organic radical-activating enzymes family. As to quaternary structure, monomer. Requires [4Fe-4S] cluster as cofactor.

It carries out the reaction glycyl-[protein] + reduced [flavodoxin] + S-adenosyl-L-methionine = glycin-2-yl radical-[protein] + semiquinone [flavodoxin] + 5'-deoxyadenosine + L-methionine + H(+). Functionally, catalyzes activation of 4-hydroxyphenylacetate decarboxylase under anaerobic conditions by generation of an organic free radical on a glycine residue, via a homolytic cleavage of S-adenosyl-L-methionine (SAM). The protein is 4-hydroxyphenylacetate decarboxylase activating enzyme of Clostridium scatologenes.